The following is a 126-amino-acid chain: Fluoride-specific ion channel FluC (126 aa).

The next 4 helical transmembrane spans lie at 1–21, 40–60, 72–92, and 104–124; these read MIVI…FGLD, LATL…GGFA, AISI…VATV, and MVNI…GLSL. Residues G79 and T82 each coordinate Na(+).

This sequence belongs to the fluoride channel Fluc/FEX (TC 1.A.43) family.

The protein resides in the cell membrane. The enzyme catalyses fluoride(in) = fluoride(out). Its activity is regulated as follows. Na(+) is not transported, but it plays an essential structural role and its presence is essential for fluoride channel function. Fluoride-specific ion channel. Important for reducing fluoride concentration in the cell, thus reducing its toxicity. This Renibacterium salmoninarum (strain ATCC 33209 / DSM 20767 / JCM 11484 / NBRC 15589 / NCIMB 2235) protein is Fluoride-specific ion channel FluC.